A 110-amino-acid polypeptide reads, in one-letter code: T cell receptor alpha variable 22 (110 aa).

The first 21 residues, Met-1–Gly-21, serve as a signal peptide directing secretion. Residues Ile-22 to Glu-110 form the Ig-like domain. Residues Asn-38 and Asn-44 are each glycosylated (N-linked (GlcNAc...) asparagine). A disulfide bridge connects residues Cys-43 and Cys-107.

As to quaternary structure, alpha-beta TR is a heterodimer composed of an alpha and beta chain; disulfide-linked. The alpha-beta TR is associated with the transmembrane signaling CD3 coreceptor proteins to form the TR-CD3 (TcR or TCR). The assembly of alpha-beta TR heterodimers with CD3 occurs in the endoplasmic reticulum where a single alpha-beta TR heterodimer associates with one CD3D-CD3E heterodimer, one CD3G-CD3E heterodimer and one CD247 homodimer forming a stable octameric structure. CD3D-CD3E and CD3G-CD3E heterodimers preferentially associate with TR alpha and TR beta chains, respectively. The association of the CD247 homodimer is the last step of TcR assembly in the endoplasmic reticulum and is required for transport to the cell surface.

The protein resides in the cell membrane. V region of the variable domain of T cell receptor (TR) alpha chain that participates in the antigen recognition. Alpha-beta T cell receptors are antigen specific receptors which are essential to the immune response and are present on the cell surface of T lymphocytes. Recognize peptide-major histocompatibility (MH) (pMH) complexes that are displayed by antigen presenting cells (APC), a prerequisite for efficient T cell adaptive immunity against pathogens. Binding of alpha-beta TR to pMH complex initiates TR-CD3 clustering on the cell surface and intracellular activation of LCK that phosphorylates the ITAM motifs of CD3G, CD3D, CD3E and CD247 enabling the recruitment of ZAP70. In turn ZAP70 phosphorylates LAT, which recruits numerous signaling molecules to form the LAT signalosome. The LAT signalosome propagates signal branching to three major signaling pathways, the calcium, the mitogen-activated protein kinase (MAPK) kinase and the nuclear factor NF-kappa-B (NF-kB) pathways, leading to the mobilization of transcription factors that are critical for gene expression and essential for T cell growth and differentiation. The T cell repertoire is generated in the thymus, by V-(D)-J rearrangement. This repertoire is then shaped by intrathymic selection events to generate a peripheral T cell pool of self-MH restricted, non-autoaggressive T cells. Post-thymic interaction of alpha-beta TR with the pMH complexes shapes TR structural and functional avidity. The chain is T cell receptor alpha variable 22 from Homo sapiens (Human).